A 93-amino-acid chain; its full sequence is Small ribosomal subunit protein uS19 (93 aa).

A disordered region spans residues 1–23 (MPRSLKKGPFVDDHLQKKVDAEN). Basic and acidic residues predominate over residues 9 to 23 (PFVDDHLQKKVDAEN).

Belongs to the universal ribosomal protein uS19 family.

In terms of biological role, protein S19 forms a complex with S13 that binds strongly to the 16S ribosomal RNA. This is Small ribosomal subunit protein uS19 from Nocardioides sp. (strain ATCC BAA-499 / JS614).